Reading from the N-terminus, the 252-residue chain is Trans-aconitate 2-methyltransferase (252 aa).

This sequence belongs to the methyltransferase superfamily. Tam family.

The protein localises to the cytoplasm. It carries out the reaction trans-aconitate + S-adenosyl-L-methionine = (E)-3-(methoxycarbonyl)pent-2-enedioate + S-adenosyl-L-homocysteine. Functionally, catalyzes the S-adenosylmethionine monomethyl esterification of trans-aconitate. This chain is Trans-aconitate 2-methyltransferase, found in Shigella flexneri.